We begin with the raw amino-acid sequence, 1306 residues long: MGAASGRRSPPLLLPLLLLLLPPPPVILELDPALQPGNFPADEAGAQIFAASFNSSAEQVLFQSTAASWAHDTNITEENARLQEEAALLSQEFSEAWGQKAKDLFDPVWQNFTDPTLLRIIGAVRTLGPANLDLEKRQKYNSLLSNMSRIYSTAKVCFPNKTAPCWSLDPELTNILASSRSYTLLLYAWEGWHNAAGIPLKPLYQDFTALSNEAYKQDGFSDTGAYWRSWYDSPTFTEDLERLYQQLEPLYLNLHAYVRRALHRRYGDRYINLRGPIPAHLLGNMWAQSWENIYDTVVPFPDKPNLDVTDVMVQKGWNATHMFRVAEEFFTSLGLLPMPPEFWAESMLEKPSDGREVVCHASAWDFYNRKDFRIKQCTRVTMDQLSTVHHEMGHVQYYLQYKGQHVSLRRGANPGFHEAIGDVLALSVSTPAHLHKIGLLDQVTNDTESDINYLLKMALEKIAFLPFGYLVDQWRWGVFSGRTPPSRYNYDWWYLRTKYQGICPPVVRNETHFDAGAKFHVPNVTPYIRYFVSFVLQFQFHEALCKEAGHQGPLHQCDIYQSTQAGAKLRALLQAGSSRPWQEVLKDMVGSDNLDARPLLSYFQPVTQWLEEQNQQNGEVLGWPEYQWRPPMPDNYPEGIDLVSDEDEARKFVEEYDRRSQVVWNEYAEANWNYSTDISTDNSKLLMEKNLQMANHTVKYGTWARKFDVTNFQNATMKRMIKKIQDLERAALPTKELEEYNQILLDMETVYSVASVCHENGTCLRLEPDLTNLMATSRNYQDLAWAWKSWRDKVGRSILPYFPKYVELTNKAARLNGYQDGGDSWRSMYEMPFLEEELEQLFQELQPLYLNLHAYVRRALHRHYGPDVINLEGPIPAHLLGNMWAQSWSNIYDLVAPFPSAPKMDATEAMIKQGWTPLRMFKEADNFFTSLGLLPMPPEFWNKSMLEKPTDGREVVCHASAWDFFNGKDFRIKQCTSVNMEDLVVAHHEMGHIQYFMQYKDLPVTFREGANPGFHEAIGDVLALSVSTPTHLHKINLLSSGDGGYEEDINFLMKMALEKIAFIPFSFLVDQWRWRVFDGSVTRENYNQEWWSLRLKYQGVCPPLARSQDDFDPGAKFHIPASVPYVRYFVSFVIQFQFHQALCQAAGHQGPLHKCDIYQSKEAGKLLADAMKLGFSQPWPEAMRLITGQSNMSAAAMMTYFKPLLDWLVTENGRHGEKLGWPQYNWTPNSARLEGPFVGSGRVNFLGLNLEEQQARVGQWVLLFLGVALLVATLGLTQRLFSIRHHSLRRPHRGPQFGSEVELRHS.

Residues 1-28 (MGAASGRRSPPLLLPLLLLLLPPPPVIL) form the signal peptide. Residues 29–1256 (ELDPALQPGN…GLNLEEQQAR (1228 aa)) are Extracellular-facing. 2 consecutive Peptidase M2 domains span residues 40–624 (PADE…LGWP) and 643–1222 (VSDE…LGWP). 5 N-linked (GlcNAc...) asparagine glycosylation sites follow: asparagine 54, asparagine 74, asparagine 111, asparagine 146, and asparagine 160. Cysteine 157 and cysteine 165 are joined by a disulfide. Tyrosine 231 serves as a coordination point for chloride. The N-linked (GlcNAc...) asparagine glycan is linked to asparagine 318. Cysteine 359 and cysteine 377 are oxidised to a cystine. Histidine 390 provides a ligand contact to Zn(2+). The active-site Proton acceptor 1 is glutamate 391. 2 residues coordinate Zn(2+): histidine 394 and glutamate 418. 2 N-linked (GlcNAc...) asparagine glycosylation sites follow: asparagine 445 and asparagine 509. Histidine 520 serves as the catalytic Proton donor 1. Asparagine 523 carries N-linked (GlcNAc...) asparagine glycosylation. Arginine 529 is a chloride binding site. Residues cysteine 545 and cysteine 557 are joined by a disulfide bond. Asparagine 673, asparagine 695, asparagine 714, and asparagine 760 each carry an N-linked (GlcNAc...) asparagine glycan. Cysteine 757 and cysteine 763 are disulfide-bonded. Residues arginine 791 and tyrosine 829 each coordinate chloride. Asparagine 942 carries N-linked (GlcNAc...) asparagine glycosylation. A disulfide bridge connects residues cysteine 957 and cysteine 975. Histidine 988 is a Zn(2+) binding site. Glutamate 989 functions as the Proton acceptor 2 in the catalytic mechanism. The Zn(2+) site is built by histidine 992 and glutamate 1016. Chloride-binding residues include tryptophan 1090 and arginine 1094. Residue histidine 1118 is the Proton donor 2 of the active site. Arginine 1127 contributes to the chloride binding site. Cysteine 1143 and cysteine 1155 are oxidised to a cystine. Asparagine 1191 and asparagine 1225 each carry an N-linked (GlcNAc...) asparagine glycan. Residues 1215-1256 (HGEKLGWPQYNWTPNSARLEGPFVGSGRVNFLGLNLEEQQAR) are juxtamembrane stalk. A helical transmembrane segment spans residues 1257-1277 (VGQWVLLFLGVALLVATLGLT). Over 1278–1306 (QRLFSIRHHSLRRPHRGPQFGSEVELRHS) the chain is Cytoplasmic. A Phosphoserine modification is found at serine 1299.

This sequence belongs to the peptidase M2 family. In terms of assembly, monomer and homodimer; homodimerizes following binding to an inhibitor. Interacts with calmodulin (CALM1, CALM2 or CALM3); interaction takes place in the cytoplasmic region and regulates phosphorylation and proteolytic cleavage. It depends on Zn(2+) as a cofactor. Chloride is required as a cofactor. Post-translationally, produced following proteolytic cleavage by secretase enzymes that cleave the transmembrane form in the juxtamembrane stalk region upstream of the transmembrane region. Cleavage can take place at different sites of the juxtamembrane stalk region. Phosphorylated by CK2 on Ser-1299; which allows membrane retention. Phosphorylated on tyrosine residues on its extracellular part, promoting cleavage by secretase enzymes and formation of the soluble form (Angiotensin-converting enzyme, soluble form).

Its subcellular location is the cell membrane. It is found in the cytoplasm. It localises to the secreted. The enzyme catalyses Release of a C-terminal dipeptide, oligopeptide-|-Xaa-Yaa, when Xaa is not Pro, and Yaa is neither Asp nor Glu. Thus, conversion of angiotensin I to angiotensin II, with increase in vasoconstrictor activity, but no action on angiotensin II.. It catalyses the reaction angiotensin I + H2O = L-histidyl-L-leucine + angiotensin II. It carries out the reaction bradykinin + H2O = L-Phe-L-Arg + bradykinin(1-7). The catalysed reaction is substance P + H2O = substance P(1-9) + L-Leu-L-Met-NH2. The enzyme catalyses substance P + H2O = substance P(1-8) + Gly-L-Leu-L-Met-NH2. It catalyses the reaction substance P + H2O = L-Phe-L-Phe-Gly-L-Leu-L-Met-NH2 + substance P(1-6). It carries out the reaction neurotensin + H2O = neurotensin(1-11) + L-isoleucyl-L-leucine. The catalysed reaction is goralatide + H2O = N-acetyl-L-seryl-L-aspartate + L-lysyl-L-proline. The enzyme catalyses Met-enkephalin + H2O = L-phenylalanyl-L-methionine + L-tyrosylglycylglycine. It catalyses the reaction Leu-enkephalin + H2O = L-tyrosylglycylglycine + L-phenylalanyl-L-leucine. It carries out the reaction Met-enkephalin-Arg-Phe + H2O = L-arginyl-L-phenylalanine + Met-enkephalin. With respect to regulation, the dipeptidyl carboxypeptidase activity is strongly activated by chloride. The dipeptidyl carboxypeptidase activity is specifically inhibited by lisinopril, captopril and enalaprilat. Functionally, dipeptidyl carboxypeptidase that removes dipeptides from the C-terminus of a variety of circulating hormones, such as angiotensin I, bradykinin or enkephalins, thereby playing a key role in the regulation of blood pressure, electrolyte homeostasis or synaptic plasticity. Composed of two similar catalytic domains, each possessing a functional active site, with different selectivity for substrates. Plays a major role in the angiotensin-renin system that regulates blood pressure and sodium retention by the kidney by converting angiotensin I to angiotensin II, resulting in an increase of the vasoconstrictor activity of angiotensin. Also able to inactivate bradykinin, a potent vasodilator, and therefore enhance the blood pressure response. Acts as a regulator of synaptic transmission by mediating cleavage of neuropeptide hormones, such as substance P, neurotensin or enkephalins. Catalyzes degradation of different enkephalin neuropeptides (Met-enkephalin, Leu-enkephalin, Met-enkephalin-Arg-Phe and possibly Met-enkephalin-Arg-Gly-Leu). Acts as a regulator of synaptic plasticity in the nucleus accumbens of the brain by mediating cleavage of Met-enkephalin-Arg-Phe, a strong ligand of Mu-type opioid receptor OPRM1, into Met-enkephalin. Met-enkephalin-Arg-Phe cleavage by ACE decreases activation of OPRM1, leading to long-term synaptic potentiation of glutamate release. Also acts as a regulator of hematopoietic stem cell differentiation by mediating degradation of hemoregulatory peptide N-acetyl-SDKP (AcSDKP). Acts as a regulator of cannabinoid signaling pathway by mediating degradation of hemopressin, an antagonist peptide of the cannabinoid receptor CNR1. Involved in amyloid-beta metabolism by catalyzing degradation of Amyloid-beta protein 40 and Amyloid-beta protein 42 peptides, thereby preventing plaque formation. Catalyzes cleavage of cholecystokinin (maturation of Cholecystokinin-8 and Cholecystokinin-5) and Gonadoliberin-1 (both maturation and degradation) hormones. Degradation of hemoregulatory peptide N-acetyl-SDKP (AcSDKP) and amyloid-beta proteins is mediated by the N-terminal catalytic domain, while angiotensin I and cholecystokinin cleavage is mediated by the C-terminal catalytic region. Its function is as follows. Soluble form that is released in blood plasma and other body fluids following proteolytic cleavage in the juxtamembrane stalk region. This is Angiotensin-converting enzyme from Bos taurus (Bovine).